A 682-amino-acid polypeptide reads, in one-letter code: Probable potassium transport system protein Kup (682 aa).

The next 12 helical transmembrane spans lie at 13–33 (GLLV…LYVM), 55–75 (ISLI…LIAL), 98–118 (WLVI…TLTP), 138–158 (IPVP…LFLF), 171–191 (TFGP…IMNL), 217–237 (VGVL…ALYS), 250–270 (SWPY…VWIL), 295–315 (FFAI…LITG), 344–364 (LFIP…VFLF), 375–395 (GLAI…YLSL), 405–425 (VFLL…LAKF), and 428–448 (GGYV…IWYF).

The protein belongs to the HAK/KUP transporter (TC 2.A.72) family.

It is found in the cell membrane. The enzyme catalyses K(+)(in) + H(+)(in) = K(+)(out) + H(+)(out). Its function is as follows. Transport of potassium into the cell. Likely operates as a K(+):H(+) symporter. This Lactobacillus gasseri (strain ATCC 33323 / DSM 20243 / BCRC 14619 / CIP 102991 / JCM 1131 / KCTC 3163 / NCIMB 11718 / NCTC 13722 / AM63) protein is Probable potassium transport system protein Kup.